The chain runs to 377 residues: Proteinase-activated receptor 3 (377 aa).

A signal peptide spans 1–19 (MRAAIFAAIGALLLSPASC). Positions 20–38 (QSGMEYDADNLAKPTLSIK) are cleaved as a propeptide — removed for receptor activation. The Extracellular segment spans residues 39-94 (TFRGAPQNSFEEFPLSAIEGWTGTTKTVKIKCPEELDSNLHVNNATMGYLSSPLST). Asparagine 82 carries N-linked (GlcNAc...) asparagine glycosylation. The helical transmembrane segment at 95–120 (KLIPAIYILVFAVGMPANAVTLWMLF) threads the bilayer. The Cytoplasmic portion of the chain corresponds to 121 to 127 (RTRTIRM). The helical transmembrane segment at 128 to 147 (TIFYTNLAIADFLFCVTLPF) threads the bilayer. Residues 148–166 (RIAYHLNGNNWVFGEVMCR) are Extracellular-facing. The cysteines at positions 165 and 244 are disulfide-linked. The helical transmembrane segment at 167–188 (ATTVIFYGNMYCSILLLACISI) threads the bilayer. The Cytoplasmic portion of the chain corresponds to 189-205 (NRYLAIVHPFTYRGLPK). Residues 206–229 (RTYALLTCGLVWTTVFLYMLPFFI) traverse the membrane as a helical segment. The Extracellular portion of the chain corresponds to 230–259 (LKQEYYLVQQDITTCHDVHNTCESSSPFQL). A helical transmembrane segment spans residues 260 to 279 (YYFISLAFFGFLIPFLVIIY). Over 280–296 (CYTAIIWTLNAKDRRWL) the chain is Cytoplasmic. The chain crosses the membrane as a helical span at residues 297 to 321 (WYIKASLLTFVIFTICFAPSNIILI). At 322–335 (IHHANYYYSNTDAL) the chain is on the extracellular side. A helical membrane pass occupies residues 336–360 (YFVYLIALCLGSLNSCLDPFLYFLM). The Cytoplasmic portion of the chain corresponds to 361 to 377 (SKITDHSTAYLTMVKLS).

Belongs to the G-protein coupled receptor 1 family. In terms of assembly, interacts with INSC/inscuteable and GPSM2. A proteolytic cleavage generates a new N-terminus that functions as a tethered ligand.

The protein localises to the cell membrane. In terms of biological role, receptor for activated thrombin coupled to G proteins that stimulate phosphoinositide hydrolysis. The polypeptide is Proteinase-activated receptor 3 (F2RL2) (Bos taurus (Bovine)).